The sequence spans 35 residues: Photosystem II reaction center protein T (35 aa).

The helical transmembrane segment at 3–23 (ALVYTFLLVSTLGIIFFAIFF) threads the bilayer.

The protein belongs to the PsbT family. As to quaternary structure, PSII is composed of 1 copy each of membrane proteins PsbA, PsbB, PsbC, PsbD, PsbE, PsbF, PsbH, PsbI, PsbJ, PsbK, PsbL, PsbM, PsbT, PsbY, PsbZ, Psb30/Ycf12, at least 3 peripheral proteins of the oxygen-evolving complex and a large number of cofactors. It forms dimeric complexes.

The protein localises to the plastid. It localises to the chloroplast thylakoid membrane. Its function is as follows. Found at the monomer-monomer interface of the photosystem II (PS II) dimer, plays a role in assembly and dimerization of PSII. PSII is a light-driven water plastoquinone oxidoreductase, using light energy to abstract electrons from H(2)O, generating a proton gradient subsequently used for ATP formation. This chain is Photosystem II reaction center protein T, found in Ceratophyllum demersum (Rigid hornwort).